The primary structure comprises 144 residues: Large ribosomal subunit protein uL15 (144 aa).

Residues 1–53 (MRLNTLSPAEGAKHSAKRLGRGIGSGLGKTGGRGHKGQKSRTGGGVRRGFEGG) are disordered. Residues 21-31 (RGIGSGLGKTG) are compositionally biased toward gly residues.

It belongs to the universal ribosomal protein uL15 family. Part of the 50S ribosomal subunit.

Its function is as follows. Binds to the 23S rRNA. The sequence is that of Large ribosomal subunit protein uL15 from Haemophilus influenzae (strain ATCC 51907 / DSM 11121 / KW20 / Rd).